Reading from the N-terminus, the 215-residue chain is Large ribosomal subunit protein uL1 (215 aa).

Belongs to the universal ribosomal protein uL1 family. In terms of assembly, part of the 50S ribosomal subunit.

Its function is as follows. Binds directly to 23S rRNA. Probably involved in E site tRNA release. In terms of biological role, protein L1 is also a translational repressor protein, it controls the translation of its operon by binding to its mRNA. This Cenarchaeum symbiosum (strain A) protein is Large ribosomal subunit protein uL1.